Here is a 204-residue protein sequence, read N- to C-terminus: Large ribosomal subunit protein bL17 (204 aa).

The tract at residues 124-204 (QAVGEAERAR…DDDGPAESKS (81 aa)) is disordered. The span at 128-142 (EAERARGTRFSERRK) shows a compositional bias: basic and acidic residues. Low complexity predominate over residues 156–191 (SESPTAAAVAAQSAEEQAPVEETLTAQAAETSAATV). Residues 192–204 (EETDDDGPAESKS) show a composition bias toward acidic residues.

This sequence belongs to the bacterial ribosomal protein bL17 family. In terms of assembly, part of the 50S ribosomal subunit. Contacts protein L32.

The protein is Large ribosomal subunit protein bL17 of Frankia alni (strain DSM 45986 / CECT 9034 / ACN14a).